We begin with the raw amino-acid sequence, 126 residues long: Small ribosomal subunit protein uS13 (126 aa).

The tract at residues 96 to 126 (LPVHGQRTHTNARTRKGPRRAIAGKKKAGKK) is disordered.

Belongs to the universal ribosomal protein uS13 family. In terms of assembly, part of the 30S ribosomal subunit. Forms a loose heterodimer with protein S19. Forms two bridges to the 50S subunit in the 70S ribosome.

In terms of biological role, located at the top of the head of the 30S subunit, it contacts several helices of the 16S rRNA. In the 70S ribosome it contacts the 23S rRNA (bridge B1a) and protein L5 of the 50S subunit (bridge B1b), connecting the 2 subunits; these bridges are implicated in subunit movement. Contacts the tRNAs in the A and P-sites. The polypeptide is Small ribosomal subunit protein uS13 (Frankia alni (strain DSM 45986 / CECT 9034 / ACN14a)).